Reading from the N-terminus, the 139-residue chain is Aspartate 1-decarboxylase (139 aa).

Catalysis depends on Ser-25, which acts as the Schiff-base intermediate with substrate; via pyruvic acid. Ser-25 bears the Pyruvic acid (Ser) mark. Thr-57 is a binding site for substrate. Catalysis depends on Tyr-58, which acts as the Proton donor. 73 to 75 (GAA) contacts substrate. The interval 117–139 (TGSDPADAPAGSGLLRGDRPAGR) is disordered.

It belongs to the PanD family. As to quaternary structure, heterooctamer of four alpha and four beta subunits. The cofactor is pyruvate. In terms of processing, is synthesized initially as an inactive proenzyme, which is activated by self-cleavage at a specific serine bond to produce a beta-subunit with a hydroxyl group at its C-terminus and an alpha-subunit with a pyruvoyl group at its N-terminus.

The protein localises to the cytoplasm. It catalyses the reaction L-aspartate + H(+) = beta-alanine + CO2. The protein operates within cofactor biosynthesis; (R)-pantothenate biosynthesis; beta-alanine from L-aspartate: step 1/1. In terms of biological role, catalyzes the pyruvoyl-dependent decarboxylation of aspartate to produce beta-alanine. The sequence is that of Aspartate 1-decarboxylase from Nocardioides sp. (strain ATCC BAA-499 / JS614).